A 373-amino-acid chain; its full sequence is Putative protein YfkA (373 aa).

The 231-residue stretch at 26–256 (YGDMQLTNVE…DIRDENTWML (231 aa)) folds into the Radical SAM core domain. Residues Cys42, Cys46, and Cys49 each coordinate [4Fe-4S] cluster.

This sequence belongs to the radical SAM superfamily. [4Fe-4S] cluster is required as a cofactor.

The sequence is that of Putative protein YfkA (yfkA) from Bacillus subtilis (strain 168).